A 130-amino-acid chain; its full sequence is Small ribosomal subunit protein uS8 (130 aa).

It belongs to the universal ribosomal protein uS8 family. Part of the 30S ribosomal subunit.

Functionally, one of the primary rRNA binding proteins, it binds directly to 16S rRNA central domain where it helps coordinate assembly of the platform of the 30S subunit. In Pyrobaculum islandicum (strain DSM 4184 / JCM 9189 / GEO3), this protein is Small ribosomal subunit protein uS8.